A 282-amino-acid polypeptide reads, in one-letter code: Bifunctional protein FolD (282 aa).

Residues 165 to 167, S190, and I231 contribute to the NADP(+) site; that span reads NRS.

This sequence belongs to the tetrahydrofolate dehydrogenase/cyclohydrolase family. As to quaternary structure, homodimer.

The enzyme catalyses (6R)-5,10-methylene-5,6,7,8-tetrahydrofolate + NADP(+) = (6R)-5,10-methenyltetrahydrofolate + NADPH. It carries out the reaction (6R)-5,10-methenyltetrahydrofolate + H2O = (6R)-10-formyltetrahydrofolate + H(+). It participates in one-carbon metabolism; tetrahydrofolate interconversion. Catalyzes the oxidation of 5,10-methylenetetrahydrofolate to 5,10-methenyltetrahydrofolate and then the hydrolysis of 5,10-methenyltetrahydrofolate to 10-formyltetrahydrofolate. The sequence is that of Bifunctional protein FolD from Clostridium botulinum (strain 657 / Type Ba4).